Reading from the N-terminus, the 144-residue chain is MTEKVKKLSPRRRARECAVQTLYSWAISKNAPEEIELNFIVDQDNEMKGVDMPYFRKLFRQTVDHVEIVDSIMAPYLDRDNVELDPIECAILRLAVYELKFELDVPYKVVINEAIEVAKVFGAEESHKYINGVLDKIAPALSRK.

This sequence belongs to the NusB family.

Involved in transcription antitermination. Required for transcription of ribosomal RNA (rRNA) genes. Binds specifically to the boxA antiterminator sequence of the ribosomal RNA (rrn) operons. The chain is Transcription antitermination protein NusB from Histophilus somni (strain 129Pt) (Haemophilus somnus).